Reading from the N-terminus, the 330-residue chain is tRNA U34 carboxymethyltransferase (330 aa).

Carboxy-S-adenosyl-L-methionine is bound by residues lysine 91, tryptophan 105, lysine 110, glycine 130, 152-154 (DPS), 181-182 (IE), methionine 196, tyrosine 200, and arginine 315.

The protein belongs to the class I-like SAM-binding methyltransferase superfamily. CmoB family. As to quaternary structure, homotetramer.

It carries out the reaction carboxy-S-adenosyl-L-methionine + 5-hydroxyuridine(34) in tRNA = 5-carboxymethoxyuridine(34) in tRNA + S-adenosyl-L-homocysteine + H(+). Its function is as follows. Catalyzes carboxymethyl transfer from carboxy-S-adenosyl-L-methionine (Cx-SAM) to 5-hydroxyuridine (ho5U) to form 5-carboxymethoxyuridine (cmo5U) at position 34 in tRNAs. The chain is tRNA U34 carboxymethyltransferase from Shewanella amazonensis (strain ATCC BAA-1098 / SB2B).